The sequence spans 632 residues: Deoxynucleoside triphosphate triphosphohydrolase SAMHD1 (632 aa).

The segment at M1–Y22 is disordered. Residues W44 to N107 enclose the SAM domain. Positions 113 and 114 each coordinate GTP. Residue N116 participates in dGTP binding. GTP contacts are provided by D134, Q139, and R142. The dGTP site is built by Q146, L147, V153, and R161. A dATP-binding site is contributed by Q146. Q146 serves as a coordination point for dCTP. Q146 lines the dTTP pocket. R161 is a dATP binding site. A dCTP-binding site is contributed by R161. R161 contributes to the dTTP binding site. Residues R161–F321 enclose the HD domain. Residues H164, H203, and D204 each coordinate Mn(2+). DATP is bound by residues H207 and H212. The dCTP site is built by H207 and H212. DTTP is bound by residues H207 and H212. H230 is an active-site residue. D316 provides a ligand contact to Mn(2+). The dGTP site is built by K317, Y320, D324, R338, R357, K359, N363, R371, Y379, Q380, H381, and K382. K317, Y320, and D324 together coordinate dATP. DCTP contacts are provided by K317, Y320, and D324. DTTP contacts are provided by K317, Y320, and D324. Residue R371 coordinates dATP. Position 371 (R371) interacts with dCTP. Q380 provides a ligand contact to dATP. Position 380 (Q380) interacts with dCTP. Q380 contacts dTTP. GTP contacts are provided by R456, K460, and K529. DGTP is bound at residue K529.

It belongs to the SAMHD1 family. In terms of assembly, homodimer; in absence of GTP and dNTP. Homotetramer; in GTP- and dNTP-bound form. Interacts with rbbp8/CtIP. The cofactor is Zn(2+).

The protein localises to the nucleus. Its subcellular location is the chromosome. The enzyme catalyses a 2'-deoxyribonucleoside 5'-triphosphate + H2O = a 2'-deoxyribonucleoside + triphosphate + H(+). The catalysed reaction is dATP + H2O = 2'-deoxyadenosine + triphosphate + H(+). It carries out the reaction dCTP + H2O = 2'-deoxycytidine + triphosphate + H(+). It catalyses the reaction dGTP + H2O = 2'-deoxyguanosine + triphosphate + H(+). The enzyme catalyses dTTP + H2O = thymidine + triphosphate + H(+). Allosterically activated and regulated via the combined actions of GTP and dNTPs (dATP, dGTP, dTTP and dCTP): Allosteric site 1 binds GTP, while allosteric site 2 binds dNTP. Allosteric activation promotes the formation of highly active homotetramers. In terms of biological role, protein that acts both as a host restriction factor involved in defense response to virus and as a regulator of DNA end resection at stalled replication forks. Has deoxynucleoside triphosphate (dNTPase) activity, which is required to restrict infection by viruses: dNTPase activity reduces cellular dNTP levels to levels too low for retroviral reverse transcription to occur, blocking early-stage virus replication in dendritic and other myeloid cells. Functions during S phase at stalled DNA replication forks to promote the resection of gapped or reversed forks: acts by stimulating the exonuclease activity of mre11, activating the ATR-CHK1 pathway and allowing the forks to restart replication. Ability to promote DNA end resection at stalled replication forks is independent of dNTPase activity. The chain is Deoxynucleoside triphosphate triphosphohydrolase SAMHD1 from Xenopus laevis (African clawed frog).